The sequence spans 149 residues: Endoribonuclease YbeY (149 aa).

Histidine 106, histidine 110, and histidine 116 together coordinate Zn(2+).

This sequence belongs to the endoribonuclease YbeY family. Zn(2+) is required as a cofactor.

Its subcellular location is the cytoplasm. Its function is as follows. Single strand-specific metallo-endoribonuclease involved in late-stage 70S ribosome quality control and in maturation of the 3' terminus of the 16S rRNA. The chain is Endoribonuclease YbeY from Methylobacillus flagellatus (strain ATCC 51484 / DSM 6875 / VKM B-1610 / KT).